Reading from the N-terminus, the 505-residue chain is Glycerol kinase (505 aa).

Position 17 (Thr17) interacts with ADP. ATP is bound by residues Thr17, Thr18, and Ser19. Thr17 lines the sn-glycerol 3-phosphate pocket. Arg21 contributes to the ADP binding site. Sn-glycerol 3-phosphate is bound by residues Arg87, Glu88, Tyr139, and Asp250. Residues Arg87, Glu88, Tyr139, Asp250, and Gln251 each contribute to the glycerol site. ADP-binding residues include Thr272 and Gly315. The ATP site is built by Thr272, Gly315, Gln319, and Gly416. ADP-binding residues include Gly416 and Asn420.

It belongs to the FGGY kinase family.

The catalysed reaction is glycerol + ATP = sn-glycerol 3-phosphate + ADP + H(+). Its pathway is polyol metabolism; glycerol degradation via glycerol kinase pathway; sn-glycerol 3-phosphate from glycerol: step 1/1. Its activity is regulated as follows. Inhibited by fructose 1,6-bisphosphate (FBP). In terms of biological role, key enzyme in the regulation of glycerol uptake and metabolism. Catalyzes the phosphorylation of glycerol to yield sn-glycerol 3-phosphate. This is Glycerol kinase from Azotobacter vinelandii (strain DJ / ATCC BAA-1303).